The chain runs to 1059 residues: Isoleucine--tRNA ligase (1059 aa).

A 'HIGH' region motif is present at residues 47–57; it reads PYTTGHIHLGT. The short motif at 591–595 is the 'KMSKS' region element; it reads KMSKS. ATP is bound at residue Lys-594.

Belongs to the class-I aminoacyl-tRNA synthetase family. IleS type 2 subfamily. In terms of assembly, monomer. The cofactor is Zn(2+).

It is found in the cytoplasm. The enzyme catalyses tRNA(Ile) + L-isoleucine + ATP = L-isoleucyl-tRNA(Ile) + AMP + diphosphate. Functionally, catalyzes the attachment of isoleucine to tRNA(Ile). As IleRS can inadvertently accommodate and process structurally similar amino acids such as valine, to avoid such errors it has two additional distinct tRNA(Ile)-dependent editing activities. One activity is designated as 'pretransfer' editing and involves the hydrolysis of activated Val-AMP. The other activity is designated 'posttransfer' editing and involves deacylation of mischarged Val-tRNA(Ile). The protein is Isoleucine--tRNA ligase of Methanoculleus marisnigri (strain ATCC 35101 / DSM 1498 / JR1).